A 338-amino-acid chain; its full sequence is S-adenosylmethionine:tRNA ribosyltransferase-isomerase (338 aa).

The protein belongs to the QueA family. As to quaternary structure, monomer.

The protein localises to the cytoplasm. The catalysed reaction is 7-aminomethyl-7-carbaguanosine(34) in tRNA + S-adenosyl-L-methionine = epoxyqueuosine(34) in tRNA + adenine + L-methionine + 2 H(+). The protein operates within tRNA modification; tRNA-queuosine biosynthesis. Functionally, transfers and isomerizes the ribose moiety from AdoMet to the 7-aminomethyl group of 7-deazaguanine (preQ1-tRNA) to give epoxyqueuosine (oQ-tRNA). The chain is S-adenosylmethionine:tRNA ribosyltransferase-isomerase from Francisella tularensis subsp. holarctica (strain FTNF002-00 / FTA).